The sequence spans 27 residues: Ferric reductase B (27 aa).

As to quaternary structure, homodimer. The cofactor is FAD.

The catalysed reaction is 2 a Fe(II)-siderophore + NAD(+) + H(+) = 2 a Fe(III)-siderophore + NADH. Functionally, reductase activity that acts on Fe(3+)-chelates and uses both NADH and NADPH as electron donors. May play a role in iron uptake. The polypeptide is Ferric reductase B (ferB) (Paracoccus denitrificans).